The following is a 323-amino-acid chain: Pseudouridine-5'-phosphate glycosidase (323 aa).

Glu-43 (proton donor) is an active-site residue. Positions 104 and 124 each coordinate substrate. Asp-156 is a binding site for Mn(2+). A substrate-binding site is contributed by 158-160 (SAD). The Nucleophile role is filled by Lys-177.

This sequence belongs to the pseudouridine-5'-phosphate glycosidase family. In terms of assembly, homotrimer. Requires Mn(2+) as cofactor.

It carries out the reaction D-ribose 5-phosphate + uracil = psi-UMP + H2O. In terms of biological role, catalyzes the reversible cleavage of pseudouridine 5'-phosphate (PsiMP) to ribose 5-phosphate and uracil. Functions biologically in the cleavage direction, as part of a pseudouridine degradation pathway. This chain is Pseudouridine-5'-phosphate glycosidase, found in Streptomyces griseus subsp. griseus (strain JCM 4626 / CBS 651.72 / NBRC 13350 / KCC S-0626 / ISP 5235).